Here is a 664-residue protein sequence, read N- to C-terminus: PAN2-PAN3 deadenylation complex subunit PAN3 (664 aa).

2 disordered regions span residues M1–N27 and D54–M134. The C3H1-type zinc-finger motif lies at N27 to H56. A compositionally biased stretch (polar residues) spans D74–T96. The segment covering P115 to P131 has biased composition (low complexity). Positions Q265–S525 are pseudokinase domain. Residues R317, D366–T373, and S425–K426 contribute to the ATP site. Positions S526–F564 form a coiled coil. Positions V565–H664 are knob domain.

It belongs to the protein kinase superfamily. PAN3 family. In terms of assembly, homodimer. Forms a heterotrimer with a catalytic subunit pan2 to form the poly(A)-nuclease (PAN) deadenylation complex. Interacts (via PAM-2 motif) with poly(A)-binding protein pab1 (via PABC domain), conferring substrate specificity of the enzyme complex.

It localises to the cytoplasm. Its function is as follows. Regulatory subunit of the poly(A)-nuclease (PAN) deadenylation complex, one of two cytoplasmic mRNA deadenylases involved in mRNA turnover. PAN specifically shortens poly(A) tails of RNA and the activity is stimulated by poly(A)-binding protein pab1. PAN deadenylation is followed by rapid degradation of the shortened mRNA tails by the CCR4-NOT complex. Deadenylated mRNAs are then degraded by two alternative mechanisms, namely exosome-mediated 3'-5' exonucleolytic degradation, or deadenylation-dependent mRNA decaping and subsequent 5'-3' exonucleolytic degradation by xrn1. May also be involved in post-transcriptional maturation of mRNA poly(A) tails. pan3 acts as a positive regulator for PAN activity, recruiting the catalytic subunit pan2 to mRNA via its interaction with RNA and with pab1. The chain is PAN2-PAN3 deadenylation complex subunit PAN3 from Aspergillus niger (strain ATCC MYA-4892 / CBS 513.88 / FGSC A1513).